Here is a 309-residue protein sequence, read N- to C-terminus: Homoserine kinase (309 aa).

Position 91-101 (91-101 (PIGSGLGSSAC)) interacts with ATP.

The protein belongs to the GHMP kinase family. Homoserine kinase subfamily.

Its subcellular location is the cytoplasm. The catalysed reaction is L-homoserine + ATP = O-phospho-L-homoserine + ADP + H(+). The protein operates within amino-acid biosynthesis; L-threonine biosynthesis; L-threonine from L-aspartate: step 4/5. Functionally, catalyzes the ATP-dependent phosphorylation of L-homoserine to L-homoserine phosphate. This is Homoserine kinase from Yersinia enterocolitica serotype O:8 / biotype 1B (strain NCTC 13174 / 8081).